We begin with the raw amino-acid sequence, 183 residues long: Capsid protein (183 aa).

Residues 150 to 183 (RQRGRTIRRRTPSPRRRRSQSPRRRRSQSRESQC) form a disordered region. Basic residues predominate over residues 151-176 (QRGRTIRRRTPSPRRRRSQSPRRRRS). The Bipartite nuclear localization signal motif lies at 158 to 175 (RRTPSPRRRRSQSPRRRR). A phosphoserine; by host mark is found at Ser162 and Ser170. 2 tandem repeats follow at residues 162–169 (SPRRRRSQ) and 170–177 (SPRRRRSQ). A 2 X 8 AA repeats of S-P-R-R-R-[PR]-S-Q region spans residues 162 to 177 (SPRRRRSQSPRRRRSQ). The segment at 177 to 183 (QSRESQC) is RNA binding.

This sequence belongs to the orthohepadnavirus core antigen family. As to quaternary structure, homodimerizes, then multimerizes. Interacts with cytosol exposed regions of viral L glycoprotein present in the reticulum-to-Golgi compartment. Interacts with human FLNB. Phosphorylated form interacts with host importin alpha; this interaction depends on the exposure of the NLS, which itself depends upon genome maturation and/or phosphorylation of the capsid protein. Interacts with host NUP153. Phosphorylated by host SRPK1, SRPK2, and maybe protein kinase C or GAPDH. Phosphorylation is critical for pregenomic RNA packaging. Protein kinase C phosphorylation is stimulated by HBx protein and may play a role in transport of the viral genome to the nucleus at the late step during the viral replication cycle.

It is found in the virion. The protein resides in the host cytoplasm. In terms of biological role, self assembles to form an icosahedral capsid. Most capsids appear to be large particles with an icosahedral symmetry of T=4 and consist of 240 copies of capsid protein, though a fraction forms smaller T=3 particles consisting of 180 capsid proteins. Entering capsids are transported along microtubules to the nucleus. Phosphorylation of the capsid is thought to induce exposure of nuclear localization signal in the C-terminal portion of the capsid protein that allows binding to the nuclear pore complex via the importin (karyopherin-) alpha and beta. Capsids are imported in intact form through the nuclear pore into the nuclear basket, where it probably binds NUP153. Only capsids that contain the mature viral genome can release the viral DNA and capsid protein into the nucleoplasm. Immature capsids get stuck in the basket. Capsids encapsulate the pre-genomic RNA and the P protein. Pre-genomic RNA is reverse-transcribed into DNA while the capsid is still in the cytoplasm. The capsid can then either be directed to the nucleus, providing more genomes for transcription, or bud through the endoplasmic reticulum to provide new virions. The sequence is that of Capsid protein from Homo sapiens (Human).